The chain runs to 313 residues: Probable cell division protein WhiA (313 aa).

A DNA-binding region (H-T-H motif) is located at residues 275 to 308 (SLRELGELAQPPLSKSCVNHRLRKLEQIAEHILA).

The protein belongs to the WhiA family.

Involved in cell division and chromosome segregation. The protein is Probable cell division protein WhiA of Desulforudis audaxviator (strain MP104C).